Consider the following 227-residue polypeptide: A-type potassium channel modulatory protein KCNIP1 (227 aa).

In terms of domain architecture, EF-hand 1; degenerate spans 38 to 94 (LEMTMVCHRPEGLEQLEAQTNFTKRELQVLYRGFKNECPSGVVNEDTFKQIYAQFFP). EF-hand domains lie at 97 to 132 (DASTYAHYLFNAFDTTQTGSVKFEDFVTALSILLRG), 133 to 168 (TVHEKLRWTFNLYDINKDGYINKEEMMDIVKAIYDM), and 181 to 216 (TPRQHVDVFFQKMDKNKDGIVTLDEFLESCQEDDNI). D146, N148, D150, Y152, E157, D194, N196, D198, and E205 together coordinate Ca(2+). The segment at 214–227 (DNIMRSLQLFQNVM) is interaction with KCND2.

This sequence belongs to the recoverin family. Component of heteromultimeric potassium channels. Identified in potassium channel complexes containing KCND1, KCND2, KCND3, KCNIP1, KCNIP2, KCNIP3, KCNIP4, DPP6 and DPP10. Part of a heterooctamer composed of the tetrameric channel and four KCNIP1 chains. Probably part of a complex consisting of KCNIP1, KCNIP2 isoform 3 and KCND2. Self-associates to form homodimers and homotetramers. Interacts with KCNIP2 isoform 3 in a calcium-dependent manner. Interacts with Naja atra venom CTX3. Interacts with KCND2; this interaction mediates the capture of both the N- and C-terminus of KCND2, thus preventing KCND2 N-type inactivation and modulates the channel gating kinetics. Interacts with KCND3; each KCNIP1 monomer interacts with two adjacent KCND3 subunits, through both the N-terminal inactivation ball of a KCND3 subunit and a C-terminal helix from the adjacent KCND3 subunit, clamping them together; this interaction stabilizes the tetrameric form and modulates the channel gating kinetics namely channel activation and inactivation kinetics and rate of recovery from inactivation. As to expression, isoform 1 and isoform 2 are expressed in brain and kidney. Isoform 1 is also expressed in liver, pancreas, skeletal muscle, small intestine and testis. Isoform 2 is also expressed in lung, pancreas, leukocytes, prostate and thymus.

It is found in the cell membrane. It localises to the cytoplasm. Its subcellular location is the cell projection. The protein resides in the dendrite. Its function is as follows. Regulatory subunit of Kv4/D (Shal)-type voltage-gated rapidly inactivating A-type potassium channels. Regulates channel density, inactivation kinetics and rate of recovery from inactivation in a calcium-dependent and isoform-specific manner. In vitro, modulates KCND1/Kv4.1 and KCND2/Kv4.2 currents. Increases the presence of KCND2 at the cell surface. This is A-type potassium channel modulatory protein KCNIP1 from Homo sapiens (Human).